Reading from the N-terminus, the 284-residue chain is Diaminopimelate epimerase (284 aa).

Substrate is bound by residues N20, Q53, and N73. C82 serves as the catalytic Proton donor. Substrate-binding positions include 83-84, N167, N200, and 218-219; these read GN and ER. C227 acts as the Proton acceptor in catalysis. A substrate-binding site is contributed by 228 to 229; that stretch reads GS.

This sequence belongs to the diaminopimelate epimerase family. As to quaternary structure, homodimer.

It is found in the cytoplasm. The catalysed reaction is (2S,6S)-2,6-diaminopimelate = meso-2,6-diaminopimelate. Its pathway is amino-acid biosynthesis; L-lysine biosynthesis via DAP pathway; DL-2,6-diaminopimelate from LL-2,6-diaminopimelate: step 1/1. In terms of biological role, catalyzes the stereoinversion of LL-2,6-diaminopimelate (L,L-DAP) to meso-diaminopimelate (meso-DAP), a precursor of L-lysine and an essential component of the bacterial peptidoglycan. The protein is Diaminopimelate epimerase of Xylella fastidiosa (strain M12).